A 392-amino-acid polypeptide reads, in one-letter code: NADH dehydrogenase-like protein YjlD (392 aa).

This sequence belongs to the NADH dehydrogenase family. FAD serves as cofactor.

This Bacillus subtilis (strain 168) protein is NADH dehydrogenase-like protein YjlD (yjlD).